Reading from the N-terminus, the 216-residue chain is Maleylacetoacetate isomerase (216 aa).

Methionine 1 bears the N-acetylmethionine mark. A GST N-terminal domain is found at 4-87 (GKPILYSYFR…YLEETRPIPR (84 aa)). Glutathione-binding positions include 14 to 19 (SSCSWR) and glutamine 45. An N6-succinyllysine modification is found at lysine 57. Glutathione contacts are provided by residues valine 59, 71–72 (QS), glutamine 111, and 115–117 (NLS). One can recognise a GST C-terminal domain in the interval 92–212 (DPQKRAIVRM…HPRRQPDTPA (121 aa)). Threonine 136 carries the phosphothreonine modification. Serine 137 bears the Phosphoserine mark. Lysine 177 carries the post-translational modification N6-succinyllysine. Serine 181 is subject to Phosphoserine.

The protein belongs to the GST superfamily. Zeta family. In terms of assembly, homodimer. Requires glutathione as cofactor. In terms of tissue distribution, expressed in liver, kidney, seminal glands and breast.

The protein resides in the cytoplasm. It catalyses the reaction 4-maleylacetoacetate = 4-fumarylacetoacetate. The enzyme catalyses RX + glutathione = an S-substituted glutathione + a halide anion + H(+). It functions in the pathway amino-acid degradation; L-phenylalanine degradation; acetoacetate and fumarate from L-phenylalanine: step 5/6. In terms of biological role, probable bifunctional enzyme showing minimal glutathione-conjugating activity with ethacrynic acid and 7-chloro-4-nitrobenz-2-oxa-1, 3-diazole and maleylacetoacetate isomerase activity. Also has low glutathione peroxidase activity with t-butyl and cumene hydroperoxides. Is able to catalyze the glutathione dependent oxygenation of dichloroacetic acid to glyoxylic acid. This is Maleylacetoacetate isomerase (Gstz1) from Mus musculus (Mouse).